The following is a 54-amino-acid chain: Preprotein translocase subunit SecG (54 aa).

At 1 to 31 the chain is on the cytoplasmic side; it reads MSSGQNSGGLMSSAGLVRYFDAEDRNSIRID. The helical transmembrane segment at 32-53 threads the bilayer; it reads PKTIVAFGVLFGVGVLVLNALA. Ile-54 is a topological domain (extracellular).

Belongs to the SEC61-beta family. In terms of assembly, component of the protein translocase complex. Heterotrimer consisting of alpha (SecY), beta (SecG) and gamma (SecE) subunits. Can form oligomers of the heterotrimer.

Its subcellular location is the cell membrane. Functionally, involved in protein export. The function of the beta subunit is unknown, but it may be involved in stabilization of the trimeric complex. The sequence is that of Preprotein translocase subunit SecG from Haloquadratum walsbyi (strain DSM 16790 / HBSQ001).